The primary structure comprises 881 residues: Leucine--tRNA ligase (881 aa).

The 'HIGH' region motif lies at 48–58 (PYPSGKLHMGH). The 'KMSKS' region motif lies at 638–642 (KMSKS). Lysine 641 is an ATP binding site.

Belongs to the class-I aminoacyl-tRNA synthetase family.

Its subcellular location is the cytoplasm. It carries out the reaction tRNA(Leu) + L-leucine + ATP = L-leucyl-tRNA(Leu) + AMP + diphosphate. This Janthinobacterium sp. (strain Marseille) (Minibacterium massiliensis) protein is Leucine--tRNA ligase.